Consider the following 170-residue polypeptide: Adenine phosphoribosyltransferase (170 aa).

Belongs to the purine/pyrimidine phosphoribosyltransferase family. In terms of assembly, homodimer.

Its subcellular location is the cytoplasm. It catalyses the reaction AMP + diphosphate = 5-phospho-alpha-D-ribose 1-diphosphate + adenine. It functions in the pathway purine metabolism; AMP biosynthesis via salvage pathway; AMP from adenine: step 1/1. Catalyzes a salvage reaction resulting in the formation of AMP, that is energically less costly than de novo synthesis. This is Adenine phosphoribosyltransferase from Brachyspira hyodysenteriae (strain ATCC 49526 / WA1).